The following is a 424-amino-acid chain: MSFPRGSQDRSVGNSSPWWPLTTEGSNGSQEAARLGEGDSPLGDVRNEELAKLEIAVLAVIFVVAVLGNSSVLLALHRTPRKTSRMHLFIRHLSLADLAVAFFQVLPQLCWDITYRFRGPDWLCRVVKHLQVFAMFASAYMLVVMTADRYIAVCHPLKTLQQPARRSRLMIATSWVLSFILSTPQYFIFSVIEIEVNNGTKTQDCWATFIQPWGTRAYVTWMTSGVFVAPVVVLGTCYGFICYHIWRNIRGKTASSRHSKGDKGSGEAVGPFHKGLLVTPCVSSVKSISRAKIRTVKMTFVIVSAYILCWAPFFIVQMWSVWDENFIWTDSENPSITITALLASLNSCCNPWIYMFFSGHLLQDCVQSFPCCHSMAQKFAKDDSDSMSRRQTSYSNNRSPTNSTGMWKDSPKSSKSIRFIPVST.

The disordered stretch occupies residues 1–40; sequence MSFPRGSQDRSVGNSSPWWPLTTEGSNGSQEAARLGEGDS. Residues 1 to 52 lie on the Extracellular side of the membrane; sequence MSFPRGSQDRSVGNSSPWWPLTTEGSNGSQEAARLGEGDSPLGDVRNEELAK. A compositionally biased stretch (polar residues) spans 9 to 30; that stretch reads DRSVGNSSPWWPLTTEGSNGSQ. The N-linked (GlcNAc...) asparagine glycan is linked to asparagine 27. A helical transmembrane segment spans residues 53-76; it reads LEIAVLAVIFVVAVLGNSSVLLAL. The Cytoplasmic portion of the chain corresponds to 77–88; it reads HRTPRKTSRMHL. The helical transmembrane segment at 89 to 110 threads the bilayer; the sequence is FIRHLSLADLAVAFFQVLPQLC. Topologically, residues 111-125 are extracellular; sequence WDITYRFRGPDWLCR. Cysteine 124 and cysteine 205 are joined by a disulfide. The chain crosses the membrane as a helical span at residues 126–147; sequence VVKHLQVFAMFASAYMLVVMTA. The Cytoplasmic segment spans residues 148–168; that stretch reads DRYIAVCHPLKTLQQPARRSR. The helical transmembrane segment at 169 to 190 threads the bilayer; sequence LMIATSWVLSFILSTPQYFIFS. Residues 191 to 220 are Extracellular-facing; sequence VIEIEVNNGTKTQDCWATFIQPWGTRAYVT. A helical transmembrane segment spans residues 221–241; sequence WMTSGVFVAPVVVLGTCYGFI. Residues 242–299 lie on the Cytoplasmic side of the membrane; that stretch reads CYHIWRNIRGKTASSRHSKGDKGSGEAVGPFHKGLLVTPCVSSVKSISRAKIRTVKMT. A helical membrane pass occupies residues 300 to 319; sequence FVIVSAYILCWAPFFIVQMW. Residues 320 to 337 are Extracellular-facing; that stretch reads SVWDENFIWTDSENPSIT. A helical transmembrane segment spans residues 338 to 357; the sequence is ITALLASLNSCCNPWIYMFF. The Cytoplasmic segment spans residues 358–424; that stretch reads SGHLLQDCVQ…KSIRFIPVST (67 aa). 2 S-palmitoyl cysteine lipidation sites follow: cysteine 371 and cysteine 372. Positions 383 to 416 are disordered; the sequence is DSDSMSRRQTSYSNNRSPTNSTGMWKDSPKSSKS. Over residues 389–405 the composition is skewed to polar residues; it reads RRQTSYSNNRSPTNSTG. The residue at position 410 (serine 410) is a Phosphoserine.

This sequence belongs to the G-protein coupled receptor 1 family. Vasopressin/oxytocin receptor subfamily. In terms of processing, palmitoylated on three cysteine residues, of which only two are identified. Localized within gonadotropes of the anterior pituitary of the brain. Broadly distributed throughout the cerebral cortex.

It is found in the cell membrane. Its subcellular location is the cytoplasmic vesicle membrane. Its function is as follows. Receptor for arginine vasopressin. The activity of this receptor is mediated by G proteins which activate a phosphatidyl-inositol-calcium second messenger system. Involved in social memory formation. The sequence is that of Vasopressin V1a receptor (Avpr1a) from Rattus norvegicus (Rat).